The sequence spans 283 residues: Tetraspanin-33 (283 aa).

Residues 1 to 24 (MARRPGVPAAYGDEFSFVSPLVKY) lie on the Cytoplasmic side of the membrane. The chain crosses the membrane as a helical span at residues 25–45 (LLFFFNMLFWVISMVMVAVGV). At 46-64 (YARLMKHAEAALACLAVDP) the chain is on the extracellular side. Residues 65–85 (AILLIVVGVLMFLLTFCGCIG) traverse the membrane as a helical segment. Topologically, residues 86–96 (SLRENICLLQT) are cytoplasmic. A helical membrane pass occupies residues 97–117 (FSLCLTIVFLLQLAAGILGFV). The Extracellular portion of the chain corresponds to 118–235 (FSDKARGKVS…DKLVNWIHSN (118 aa)). 4 cysteine pairs are disulfide-bonded: cysteine 156-cysteine 224, cysteine 157-cysteine 189, cysteine 173-cysteine 183, and cysteine 190-cysteine 203. Asparagine 172 carries an N-linked (GlcNAc...) asparagine glycan. A helical transmembrane segment spans residues 236–256 (LFLLGGVALGLAIPQLVGILL). At 257–283 (SQVLVNQIKDQIKLQLYNQQHRADPWY) the chain is on the cytoplasmic side.

This sequence belongs to the tetraspanin (TM4SF) family. As to quaternary structure, homodimer; disulfide-linked. Interacts (via extracellular domain) with ADAM10 (via extracellular domain). Interacts (via cytoplasmic domain) with PLEKHA7 (via WW domains); the interaction is dependent on PDZD11 being bound to PLEKHA7 and facilitates the docking of ADAM10 to zonula adherens. As to expression, predominantly expressed in erythroblasts.

It localises to the cell membrane. Its subcellular location is the cell junction. It is found in the adherens junction. The protein resides in the cytoplasm. Part of TspanC8 subgroup, composed of 6 members that interact with the transmembrane metalloprotease ADAM10. This interaction is required for ADAM10 exit from the endoplasmic reticulum and for enzymatic maturation and trafficking to the cell surface as well as substrate specificity. Different TspanC8/ADAM10 complexes have distinct substrates. Plays an important role in normal erythropoiesis. It has a role in the differentiation of erythroid progenitors. Negatively regulates ligand-induced Notch activity probably by regulating ADAM10 activity. Mediates docking of ADAM10 to zonula adherens by interacting with ADAM10 and, in a PDZD11-dependent manner, with the zonula adherens protein PLEKHA7. The sequence is that of Tetraspanin-33 (Tspan33) from Mus musculus (Mouse).